The following is a 189-amino-acid chain: uncharacterized protein (189 aa).

The HTH tetR-type domain occupies 2 to 62 (RPTNKRILDA…ALLSQHSSNR (61 aa)). A DNA-binding region (H-T-H motif) is located at residues 25–44 (TTKEIAEKANVSEATIFRNF).

This is an uncharacterized protein from Bacillus subtilis (strain 168).